The primary structure comprises 503 residues: Discoidin, CUB and LCCL domain-containing protein 1 (503 aa).

The signal sequence occupies residues 1-25 (MGTGAGGPSVLALLFAVCAPLRLQA). The Extracellular portion of the chain corresponds to 26–250 (EELGDGCGHI…FTTPGMNITT (225 aa)). 4 cysteine pairs are disulfide-bonded: C32–C59, C85–C103, C149–C165, and C169–C191. Residues 32-141 (CGHIVTSQDS…RGFLLTYASS (110 aa)) form the CUB domain. An N-linked (GlcNAc...) asparagine glycan is attached at N55. One can recognise an LCCL domain in the interval 143–239 (HPDLITCLER…RHGSLSEKRF (97 aa)). An N-linked (GlcNAc...) asparagine glycan is attached at N247. The chain crosses the membrane as a helical span at residues 251–271 (VAIPSVIFIALLLTGMGIFAI). At 272–503 (CRKRKKKGNP…LNQTAMTALL (232 aa)) the chain is on the cytoplasmic side. S305 is modified (phosphoserine). The residue at position 406 (T406) is a Phosphothreonine. The disordered stretch occupies residues 410-503 (QSGYRVPGPR…LNQTAMTALL (94 aa)). Polar residues predominate over residues 494-503 (LNQTAMTALL).

The protein resides in the membrane. The protein is Discoidin, CUB and LCCL domain-containing protein 1 (Dcbld1) of Mus musculus (Mouse).